A 55-amino-acid polypeptide reads, in one-letter code: ATP synthase F(0) complex subunit 8 (55 aa).

Residues 9–29 (WFFIMIMSWAVFLLLIQPKLL) traverse the membrane as a helical segment.

This sequence belongs to the ATPase protein 8 family. As to quaternary structure, component of the ATP synthase complex composed at least of ATP5F1A/subunit alpha, ATP5F1B/subunit beta, ATP5MC1/subunit c (homooctomer), MT-ATP6/subunit a, MT-ATP8/subunit 8, ATP5ME/subunit e, ATP5MF/subunit f, ATP5MG/subunit g, ATP5MK/subunit k, ATP5MJ/subunit j, ATP5F1C/subunit gamma, ATP5F1D/subunit delta, ATP5F1E/subunit epsilon, ATP5PF/subunit F6, ATP5PB/subunit b, ATP5PD/subunit d, ATP5PO/subunit OSCP. ATP synthase complex consists of a soluble F(1) head domain (subunits alpha(3) and beta(3)) - the catalytic core - and a membrane F(0) domain - the membrane proton channel (subunits c, a, 8, e, f, g, k and j). These two domains are linked by a central stalk (subunits gamma, delta, and epsilon) rotating inside the F1 region and a stationary peripheral stalk (subunits F6, b, d, and OSCP).

It is found in the mitochondrion membrane. In terms of biological role, subunit 8, of the mitochondrial membrane ATP synthase complex (F(1)F(0) ATP synthase or Complex V) that produces ATP from ADP in the presence of a proton gradient across the membrane which is generated by electron transport complexes of the respiratory chain. ATP synthase complex consist of a soluble F(1) head domain - the catalytic core - and a membrane F(1) domain - the membrane proton channel. These two domains are linked by a central stalk rotating inside the F(1) region and a stationary peripheral stalk. During catalysis, ATP synthesis in the catalytic domain of F(1) is coupled via a rotary mechanism of the central stalk subunits to proton translocation. In vivo, can only synthesize ATP although its ATP hydrolase activity can be activated artificially in vitro. Part of the complex F(0) domain. This chain is ATP synthase F(0) complex subunit 8, found in Rhea americana (Greater rhea).